An 87-amino-acid polypeptide reads, in one-letter code: Small ribosomal subunit protein uS17 (87 aa).

This sequence belongs to the universal ribosomal protein uS17 family. As to quaternary structure, part of the 30S ribosomal subunit.

One of the primary rRNA binding proteins, it binds specifically to the 5'-end of 16S ribosomal RNA. The protein is Small ribosomal subunit protein uS17 of Endomicrobium trichonymphae.